A 689-amino-acid chain; its full sequence is Elongation factor G (689 aa).

Residues 8–282 (ERTRNIGIMA…GVVAYMPSPL (275 aa)) enclose the tr-type G domain. GTP is bound by residues 17-24 (AHIDAGKT), 81-85 (DTPGH), and 135-138 (NKMD).

The protein belongs to the TRAFAC class translation factor GTPase superfamily. Classic translation factor GTPase family. EF-G/EF-2 subfamily.

It is found in the cytoplasm. Functionally, catalyzes the GTP-dependent ribosomal translocation step during translation elongation. During this step, the ribosome changes from the pre-translocational (PRE) to the post-translocational (POST) state as the newly formed A-site-bound peptidyl-tRNA and P-site-bound deacylated tRNA move to the P and E sites, respectively. Catalyzes the coordinated movement of the two tRNA molecules, the mRNA and conformational changes in the ribosome. This is Elongation factor G from Alkaliphilus metalliredigens (strain QYMF).